The following is a 378-amino-acid chain: Chorismate synthase (378 aa).

2 residues coordinate NADP(+): arginine 48 and arginine 54. FMN contacts are provided by residues arginine 125–serine 127, asparagine 238–alanine 239, glycine 278, lysine 293–serine 297, and arginine 319.

This sequence belongs to the chorismate synthase family. Homotetramer. FMNH2 is required as a cofactor.

The catalysed reaction is 5-O-(1-carboxyvinyl)-3-phosphoshikimate = chorismate + phosphate. Its pathway is metabolic intermediate biosynthesis; chorismate biosynthesis; chorismate from D-erythrose 4-phosphate and phosphoenolpyruvate: step 7/7. Functionally, catalyzes the anti-1,4-elimination of the C-3 phosphate and the C-6 proR hydrogen from 5-enolpyruvylshikimate-3-phosphate (EPSP) to yield chorismate, which is the branch point compound that serves as the starting substrate for the three terminal pathways of aromatic amino acid biosynthesis. This reaction introduces a second double bond into the aromatic ring system. This chain is Chorismate synthase, found in Azoarcus sp. (strain BH72).